The following is a 451-amino-acid chain: Exodeoxyribonuclease 7 large subunit (451 aa).

This sequence belongs to the XseA family. Heterooligomer composed of large and small subunits.

Its subcellular location is the cytoplasm. The catalysed reaction is Exonucleolytic cleavage in either 5'- to 3'- or 3'- to 5'-direction to yield nucleoside 5'-phosphates.. In terms of biological role, bidirectionally degrades single-stranded DNA into large acid-insoluble oligonucleotides, which are then degraded further into small acid-soluble oligonucleotides. The chain is Exodeoxyribonuclease 7 large subunit from Neisseria meningitidis serogroup B (strain ATCC BAA-335 / MC58).